The chain runs to 370 residues: Homoserine kinase (370 aa).

A chloroplast-targeting transit peptide spans 1 to 34 (MASLCFQSPSKPISYFQPKSNPSPPLFAKVSVFR). ATP is bound at residue 143 to 154 (LPLGSGLGSSAA).

This sequence belongs to the GHMP kinase family. Homoserine kinase subfamily.

It is found in the plastid. The protein resides in the chloroplast stroma. It carries out the reaction L-homoserine + ATP = O-phospho-L-homoserine + ADP + H(+). The protein operates within amino-acid biosynthesis; L-threonine biosynthesis; L-threonine from L-aspartate: step 4/5. In terms of biological role, catalyzes the ATP-dependent phosphorylation of L-homoserine to L-homoserine phosphate. Is specific for L-homoserine and cannot use other substrates such D-serine, L-serine, D-threonine and L-threonine, galactose or D-homoserine in vitro. Required for susceptibility to the downy mildew pathogen Hyaloperonospora parasitica. This is Homoserine kinase (HSK) from Arabidopsis thaliana (Mouse-ear cress).